The sequence spans 106 residues: Large ribosomal subunit protein uL24 (106 aa).

The protein belongs to the universal ribosomal protein uL24 family. Part of the 50S ribosomal subunit.

Functionally, one of two assembly initiator proteins, it binds directly to the 5'-end of the 23S rRNA, where it nucleates assembly of the 50S subunit. Its function is as follows. One of the proteins that surrounds the polypeptide exit tunnel on the outside of the subunit. The protein is Large ribosomal subunit protein uL24 of Dechloromonas aromatica (strain RCB).